Reading from the N-terminus, the 98-residue chain is NADH-ubiquinone oxidoreductase chain 4L (98 aa).

3 helical membrane-spanning segments follow: residues 1 to 21 (MSPL…GLAF), 26 to 46 (LISA…PLSI), and 56 to 76 (FALV…TGLA).

The protein belongs to the complex I subunit 4L family. Core subunit of respiratory chain NADH dehydrogenase (Complex I) which is composed of 45 different subunits.

The protein localises to the mitochondrion inner membrane. It carries out the reaction a ubiquinone + NADH + 5 H(+)(in) = a ubiquinol + NAD(+) + 4 H(+)(out). Its function is as follows. Core subunit of the mitochondrial membrane respiratory chain NADH dehydrogenase (Complex I) which catalyzes electron transfer from NADH through the respiratory chain, using ubiquinone as an electron acceptor. Part of the enzyme membrane arm which is embedded in the lipid bilayer and involved in proton translocation. The sequence is that of NADH-ubiquinone oxidoreductase chain 4L (MT-ND4L) from Gallus gallus (Chicken).